A 73-amino-acid chain; its full sequence is Probable minor pilin MMP0528 (73 aa).

The propeptide occupies 1–10 (MLKKLYSKKG). Positions 11–19 (QVSMEMGIL) match the QXSXEXXXL motif.

The N-terminus is probably cleaved by the prepilin peptidase EppA, which recognizes the class III signal sequence.

The protein localises to the secreted. The protein resides in the cell surface. Its subcellular location is the fimbrium. The polypeptide is Probable minor pilin MMP0528 (Methanococcus maripaludis (strain DSM 14266 / JCM 13030 / NBRC 101832 / S2 / LL)).